The primary structure comprises 188 residues: Marginal zone B- and B1-cell-specific protein (188 aa).

The signal sequence occupies residues 1 to 21 (MRLPLPLLLLFGCRAILGSFG). Cystine bridges form between Cys-49/Cys-177, Cys-52/Cys-170, and Cys-94/Cys-142. The Prevents secretion from ER signature appears at 185 to 188 (REEL).

The protein belongs to the MZB1 family. As to quaternary structure, part of the ER chaperone complex, a multi-protein complex in the endoplasmic reticulum containing a large number of molecular chaperones which associates with unassembled incompletely folded immunoglobulin heavy chains. Interacts with HSP90B1 and PDIA3 in a calcium-dependent manner. Forms an interchain disulfide bond with IgM monomers.

Its subcellular location is the endoplasmic reticulum lumen. The protein localises to the secreted. Functionally, associates with immunoglobulin M (IgM) heavy and light chains and promotes IgM assembly and secretion. May exert its effect by acting as a molecular chaperone or as an oxidoreductase as it displays a low level of oxidoreductase activity. Helps to diversify peripheral B-cell functions by regulating Ca(2+) stores, antibody secretion, and integrin activation. Its function is as follows. Acts as a hormone-regulated adipokine/pro-inflammatory cytokine that is implicated in causing chronic inflammation, affecting cellular expansion and blunting insulin response in adipocytes. May have a role in the onset of insulin resistance. The polypeptide is Marginal zone B- and B1-cell-specific protein (Mzb1) (Rattus norvegicus (Rat)).